The chain runs to 557 residues: 6-phosphofructo-2-kinase/fructose-2,6-bisphosphatase 2 (557 aa).

Low complexity predominate over residues 1-16 (MSENSTFSTEDSSSSS). Residues 1-21 (MSENSTFSTEDSSSSSYKPHA) are disordered. Residue serine 2 is modified to N-acetylserine. The segment at 2–251 (SENSTFSTED…VYYLMNIHVH (250 aa)) is 6-phosphofructo-2-kinase. Serine 32 is modified (phosphoserine; by PKA). 48–56 (GLPARGKTY) lines the ATP pocket. Beta-D-fructose 6-phosphate-binding residues include arginine 81 and arginine 105. The active site involves aspartate 131. Positions 133 and 139 each coordinate beta-D-fructose 6-phosphate. Cysteine 161 is an active-site residue. 170–175 (NILEVK) is a binding site for ATP. Beta-D-fructose 6-phosphate contacts are provided by lysine 175, arginine 196, and tyrosine 200. Residues 252 to 557 (PRTIYLCRHG…PSMASLTLLS (306 aa)) form a fructose-2,6-bisphosphatase region. Arginine 259 contacts beta-D-fructose 2,6-bisphosphate. Histidine 260 acts as the Tele-phosphohistidine intermediate in catalysis. Residues asparagine 266 and glycine 272 each coordinate beta-D-fructose 2,6-bisphosphate. The Proton donor/acceptor role is filled by glutamate 329. The beta-D-fructose 2,6-bisphosphate site is built by tyrosine 340, arginine 354, lysine 358, tyrosine 369, glutamine 395, and arginine 399. 351 to 354 (FALR) lines the ATP pocket. ATP contacts are provided by residues 395-399 (QAVMR) and tyrosine 431. The segment at 449–495 (RDKPTHNFPKSQTPVRMRRNSFTPLSSSNTIRRPRNYSVGSRPLKPL) is disordered. The span at 456–479 (FPKSQTPVRMRRNSFTPLSSSNTI) shows a compositional bias: polar residues. Serine 469 bears the Phosphoserine mark. The residue at position 471 (threonine 471) is a Phosphothreonine. The residue at position 478 (threonine 478) is a Phosphothreonine; by PKC. Serine 486 and serine 496 each carry phosphoserine.

It in the C-terminal section; belongs to the phosphoglycerate mutase family. In terms of assembly, homodimer. Forms a heterodimer with PFKFB3. In terms of processing, phosphorylation by AMPK stimulates activity.

It catalyses the reaction beta-D-fructose 2,6-bisphosphate + H2O = beta-D-fructose 6-phosphate + phosphate. The catalysed reaction is beta-D-fructose 6-phosphate + ATP = beta-D-fructose 2,6-bisphosphate + ADP + H(+). With respect to regulation, phosphorylation results in the activation of the kinase activity. Synthesis and degradation of fructose 2,6-bisphosphate. This is 6-phosphofructo-2-kinase/fructose-2,6-bisphosphatase 2 (Pfkfb2) from Rattus norvegicus (Rat).